The following is a 123-amino-acid chain: Protein Wnt-7b (123 aa).

Residue S1 is the site of O-palmitoleoyl serine; by PORCN attachment. Positions 33–61 (VEVVRASRLRQPTFLKIKQIRSYQKPMET) are disordered linker. An intrachain disulfide couples C89 to C104. Residue N90 is glycosylated (N-linked (GlcNAc...) asparagine).

The protein belongs to the Wnt family. In terms of processing, palmitoleoylation is required for efficient binding to frizzled receptors. Depalmitoleoylation leads to Wnt signaling pathway inhibition.

The protein resides in the secreted. The protein localises to the extracellular space. It localises to the extracellular matrix. In terms of biological role, ligand for members of the frizzled family of seven transmembrane receptors that functions in the canonical Wnt/beta-catenin signaling pathway. Required for normal fusion of the chorion and the allantois during placenta development. Required for central nervous system (CNS) angiogenesis and blood-brain barrier regulation. The chain is Protein Wnt-7b (WNT-7B) from Sceloporus occidentalis (Western fence lizard).